Here is a 280-residue protein sequence, read N- to C-terminus: 4-deoxy-L-threo-5-hexosulose-uronate ketol-isomerase (280 aa).

The Zn(2+) site is built by His-198, His-200, Glu-205, and His-247.

The protein belongs to the KduI family. It depends on Zn(2+) as a cofactor.

The catalysed reaction is 5-dehydro-4-deoxy-D-glucuronate = 3-deoxy-D-glycero-2,5-hexodiulosonate. It participates in glycan metabolism; pectin degradation; 2-dehydro-3-deoxy-D-gluconate from pectin: step 4/5. In terms of biological role, catalyzes the isomerization of 5-dehydro-4-deoxy-D-glucuronate to 3-deoxy-D-glycero-2,5-hexodiulosonate. This Bacteroides fragilis (strain YCH46) protein is 4-deoxy-L-threo-5-hexosulose-uronate ketol-isomerase.